The primary structure comprises 263 residues: Undecaprenyl-diphosphatase 3 (263 aa).

8 helical membrane-spanning segments follow: residues glycine 15–phenylalanine 37, alanine 42–tryptophan 62, leucine 83–isoleucine 103, valine 106–valine 126, isoleucine 142–phenylalanine 162, alanine 183–isoleucine 203, leucine 216–leucine 236, and valine 242–isoleucine 262.

This sequence belongs to the UppP family.

It is found in the cell membrane. The catalysed reaction is di-trans,octa-cis-undecaprenyl diphosphate + H2O = di-trans,octa-cis-undecaprenyl phosphate + phosphate + H(+). Its function is as follows. Catalyzes the dephosphorylation of undecaprenyl diphosphate (UPP). Confers resistance to bacitracin. The protein is Undecaprenyl-diphosphatase 3 of Bacillus thuringiensis subsp. konkukian (strain 97-27).